The primary structure comprises 513 residues: Palmitoyltransferase ZDHHC14 (513 aa).

At 1-59 (MHLGVEEPIRECQYNQICTHNSSPMDTPHIKKKKNKRKWQVFPGRNRFYCNGRIMMAKQ) the chain is on the cytoplasmic side. The helical transmembrane segment at 60-80 (TGVFYLTMVLILVTSGLFFAF) threads the bilayer. Residues 81–88 (DCPFLASN) are Lumenal-facing. Residues 89 to 109 (LTPAIPAIGGVLFVFVMGMLL) traverse the membrane as a helical segment. Residues 110 to 207 (RASFSDPGVL…GNCVGRRNYR (98 aa)) lie on the Cytoplasmic side of the membrane. In terms of domain architecture, DHHC spans 164-214 (KYCFTCKIFRPPRASHCSLCDNCVDRFDHHCPWVGNCVGRRNYRFFYLFIL). The active-site S-palmitoyl cysteine intermediate is the Cys-194. The helical transmembrane segment at 208–228 (FFYLFILSLSFLTIFIFAFVI) threads the bilayer. Residues 229 to 266 (THVILNALRKALALSTAADFEAVQKDPTGLAFLVLSKT) lie on the Lumenal side of the membrane. Residues 267–287 (ALLDILEVVVCFFSVWSIVGL) form a helical membrane-spanning segment. Topologically, residues 288-513 (SGFHTYLISS…VRGLVKLSSV (226 aa)) are cytoplasmic. The disordered stretch occupies residues 348 to 369 (FIQPDTPQPATQTNGTSACPPN). Positions 355–369 (QPATQTNGTSACPPN) are enriched in polar residues.

The protein belongs to the DHHC palmitoyltransferase family. ERF2/ZDHHC9 subfamily.

It is found in the endoplasmic reticulum membrane. The protein resides in the golgi apparatus membrane. It catalyses the reaction L-cysteinyl-[protein] + hexadecanoyl-CoA = S-hexadecanoyl-L-cysteinyl-[protein] + CoA. Palmitoyltransferase that could catalyze the addition of palmitate onto various protein substrates. The sequence is that of Palmitoyltransferase ZDHHC14 (zdhhc14) from Danio rerio (Zebrafish).